The following is a 347-amino-acid chain: Eukaryotic translation initiation factor 3 subunit H (347 aa).

In terms of domain architecture, MPN spans 6–149 (VCIDSSVALK…PSSTGPQGHT (144 aa)). The interval 136-155 (SDTDPSSTGPQGHTTTTPSG) is disordered. The span at 138 to 155 (TDPSSTGPQGHTTTTPSG) shows a compositional bias: polar residues.

This sequence belongs to the eIF-3 subunit H family. As to quaternary structure, component of the eukaryotic translation initiation factor 3 (eIF-3) complex.

It is found in the cytoplasm. Functionally, component of the eukaryotic translation initiation factor 3 (eIF-3) complex, which is involved in protein synthesis of a specialized repertoire of mRNAs and, together with other initiation factors, stimulates binding of mRNA and methionyl-tRNAi to the 40S ribosome. The eIF-3 complex specifically targets and initiates translation of a subset of mRNAs involved in cell proliferation. The chain is Eukaryotic translation initiation factor 3 subunit H from Yarrowia lipolytica (strain CLIB 122 / E 150) (Yeast).